The primary structure comprises 396 residues: Phosphoglycerate kinase (396 aa).

Residues 21 to 23 (DFN), Arg36, 59 to 62 (HLGK), Arg119, and Arg156 each bind substrate. Residues Lys206, Glu325, and 352–355 (GGDS) contribute to the ATP site.

This sequence belongs to the phosphoglycerate kinase family. Monomer.

Its subcellular location is the cytoplasm. It carries out the reaction (2R)-3-phosphoglycerate + ATP = (2R)-3-phospho-glyceroyl phosphate + ADP. The protein operates within carbohydrate degradation; glycolysis; pyruvate from D-glyceraldehyde 3-phosphate: step 2/5. The polypeptide is Phosphoglycerate kinase (Staphylococcus epidermidis (strain ATCC 35984 / DSM 28319 / BCRC 17069 / CCUG 31568 / BM 3577 / RP62A)).